We begin with the raw amino-acid sequence, 387 residues long: S-adenosylmethionine synthase (387 aa).

An ATP-binding site is contributed by histidine 16. Aspartate 18 is a binding site for Mg(2+). Glutamate 44 lines the K(+) pocket. The L-methionine site is built by glutamate 57 and glutamine 100. The tract at residues 100–110 (QSADIAVGVDE) is flexible loop. Residues 165-167 (DAK), aspartate 241, 247-248 (RK), alanine 264, and lysine 268 each bind ATP. Aspartate 241 lines the L-methionine pocket. Residue lysine 272 participates in L-methionine binding.

It belongs to the AdoMet synthase family. In terms of assembly, homotetramer; dimer of dimers. The cofactor is Mg(2+). K(+) is required as a cofactor.

It is found in the cytoplasm. It catalyses the reaction L-methionine + ATP + H2O = S-adenosyl-L-methionine + phosphate + diphosphate. It functions in the pathway amino-acid biosynthesis; S-adenosyl-L-methionine biosynthesis; S-adenosyl-L-methionine from L-methionine: step 1/1. Catalyzes the formation of S-adenosylmethionine (AdoMet) from methionine and ATP. The overall synthetic reaction is composed of two sequential steps, AdoMet formation and the subsequent tripolyphosphate hydrolysis which occurs prior to release of AdoMet from the enzyme. In Marinomonas sp. (strain MWYL1), this protein is S-adenosylmethionine synthase.